Reading from the N-terminus, the 602-residue chain is Bifunctional ribose 1,5-bisphosphokinase-thymidine phosphorylase (602 aa).

Residues 1–187 (MKESGTFFLV…ALRNGANAGS (187 aa)) form a ribose 1,5-bisphosphokinase region. Residues 188-602 (VPQPASRRHL…ASTAVRVDPD (415 aa)) are thymidinephosphorylase.

The protein in the N-terminal section; belongs to the ribose 1,5-bisphosphokinase family. It in the C-terminal section; belongs to the thymidine/pyrimidine-nucleoside phosphorylase family. Type 2 subfamily.

It catalyses the reaction alpha-D-ribose 1,5-bisphosphate + ATP = 5-phospho-alpha-D-ribose 1-diphosphate + ADP. It carries out the reaction thymidine + phosphate = 2-deoxy-alpha-D-ribose 1-phosphate + thymine. Its pathway is metabolic intermediate biosynthesis; 5-phospho-alpha-D-ribose 1-diphosphate biosynthesis; 5-phospho-alpha-D-ribose 1-diphosphate from D-ribose 5-phosphate (route II): step 3/3. Functionally, catalyzes the phosphorylation of ribose 1,5-bisphosphate to 5-phospho-D-ribosyl alpha-1-diphosphate (PRPP). In Cupriavidus pinatubonensis (strain JMP 134 / LMG 1197) (Cupriavidus necator (strain JMP 134)), this protein is Bifunctional ribose 1,5-bisphosphokinase-thymidine phosphorylase (phnN).